Here is a 542-residue protein sequence, read N- to C-terminus: POTE ankyrin domain family member C (542 aa).

7 ANK repeats span residues 138–171, 172–201, 205–234, 238–267, 271–300, 304–333, and 337–373; these read EDLDKLHRAAWWGKVPRKDLIVMLRDTDMNKRDK, QKRTALHLASANGNSEVVQLLLDRRCQLNV, KKRTALIKAVQCQEDECVLMLLEHGADQNI, YGNTTLHYAVHNEDKLMAKALLLYGADIES, CGLTPLLLGVHEQKQQVVKFLIKKKANLNA, YGRTALILAVCCGSASIVNLLLEQNVDVSS, and SGQTAREYAVSSHHHVICELLSDYKEKQMLKISSENS. A disordered region spans residues 369-494; it reads SSENSNPEQD…NTGISQDEIL (126 aa). Basic and acidic residues-rich tracts occupy residues 377-392, 401-412, and 466-481; these read QDLKLTSEEESQRLKV, MSQEPEINKDCD, and EEYHSDEQNDTRKQLS. Positions 482 to 494 are enriched in polar residues; that stretch reads EEQNTGISQDEIL. A coiled-coil region spans residues 489-538; that stretch reads SQDEILTNKQKQIEVAEKKMNSELSLSHKKEEDLLRENSMLQEEIAMLIS.

This sequence belongs to the POTE family. As to expression, expressed in prostate and testis.

This chain is POTE ankyrin domain family member C (POTEC), found in Homo sapiens (Human).